A 440-amino-acid chain; its full sequence is RNA polymerase II C-terminal domain phosphatase-like 4 (440 aa).

Residues 1–36 (MSVASDSPVHSSSSSDDLAAFLDAELDSASDASSGP) are compositionally biased toward low complexity. A disordered region spans residues 1–49 (MSVASDSPVHSSSSSDDLAAFLDAELDSASDASSGPSEEEEAEDDVESG). Positions 37–47 (SEEEEAEDDVE) are enriched in acidic residues. In terms of domain architecture, FCP1 homology spans 118–292 (QRQRKLYLVL…DHRYKSLSEL (175 aa)). A BRCT domain is found at 337–429 (VRKEILKGCK…MKQPEENFGL (93 aa)).

As to quaternary structure, interacts with RAP74. The cofactor is Mg(2+). Co(2+) serves as cofactor. It depends on Mn(2+) as a cofactor.

It localises to the nucleus. It carries out the reaction O-phospho-L-seryl-[protein] + H2O = L-seryl-[protein] + phosphate. It catalyses the reaction O-phospho-L-threonyl-[protein] + H2O = L-threonyl-[protein] + phosphate. Functionally, processively dephosphorylates 'Ser-2' and/or 'Ser-5' of the heptad repeats YSPTSPS in the C-terminal domain of the largest RNA polymerase II subunit (RPB1). This promotes the activity of RNA polymerase II. Required for normal plant growth. This chain is RNA polymerase II C-terminal domain phosphatase-like 4 (CPL4), found in Arabidopsis thaliana (Mouse-ear cress).